The sequence spans 434 residues: Alpha-enolase (434 aa).

Ser-2 bears the N-acetylserine mark. An N6-acetyllysine modification is found at Lys-5. Ser-40 contributes to the Mg(2+) binding site. Tyr-44 carries the phosphotyrosine modification. Position 60 is an N6-acetyllysine; alternate (Lys-60). Lys-60 is modified (N6-succinyllysine; alternate). N6-acetyllysine occurs at positions 64 and 71. Position 89 is an N6-acetyllysine; alternate (Lys-89). The residue at position 89 (Lys-89) is an N6-succinyllysine; alternate. N6-acetyllysine occurs at positions 92 and 126. His-158 and Glu-167 together coordinate substrate. Residues Lys-193 and Lys-199 each carry the N6-acetyllysine modification. Position 202 is an N6-acetyllysine; alternate (Lys-202). Lys-202 participates in a covalent cross-link: Glycyl lysine isopeptide (Lys-Gly) (interchain with G-Cter in SUMO2); alternate. Glu-210 functions as the Proton donor in the catalytic mechanism. N6-acetyllysine; alternate is present on residues Lys-228 and Lys-233. Lys-228 is subject to N6-succinyllysine; alternate. Residue Lys-228 is modified to N6-(2-hydroxyisobutyryl)lysine; alternate. Lys-233 is subject to N6-malonyllysine; alternate. Asp-245 serves as a coordination point for Mg(2+). Ser-254 is modified (phosphoserine). Lys-256 carries the post-translational modification N6-acetyllysine. Ser-263 is modified (phosphoserine). The residue at position 281 (Lys-281) is an N6-acetyllysine; alternate. At Lys-281 the chain carries N6-(2-hydroxyisobutyryl)lysine; alternate. Tyr-287 is modified (phosphotyrosine). Ser-291 carries the phosphoserine modification. Glu-293 and Asp-318 together coordinate Mg(2+). Positions 293 and 318 each coordinate substrate. N6-acetyllysine is present on residues Lys-335 and Lys-343. Residue Lys-343 is the Proton acceptor of the active site. Residues 370 to 373 and Lys-394 each bind substrate; that span reads SHRS. Residues 405-434 form a required for interaction with PLG region; the sequence is AKYNQILRIEEELGSKAKFAGRSFRNPLAK. N6-acetyllysine is present on Lys-406. Lys-420 bears the N6-acetyllysine; alternate mark. Lys-420 bears the N6-succinyllysine; alternate mark. Lys-420 bears the N6-malonyllysine; alternate mark.

The protein belongs to the enolase family. Mammalian enolase is composed of 3 isozyme subunits, alpha, beta and gamma, which can form homodimers or heterodimers which are cell-type and development-specific. ENO1 interacts with PLG in the neuronal plasma membrane and promotes its activation. The C-terminal lysine is required for this binding. Interacts with ENO4 and PGAM2. Interacts with CMTM6. It depends on Mg(2+) as a cofactor. ISGylated. Post-translationally, lysine 2-hydroxyisobutyrylation (Khib) by p300/EP300 activates the phosphopyruvate hydratase activity. In terms of tissue distribution, the alpha/alpha homodimer is expressed in embryo and in most adult tissues. The alpha/beta heterodimer and the beta/beta homodimer are found in striated muscle, and the alpha/gamma heterodimer and the gamma/gamma homodimer in neurons.

The protein resides in the cytoplasm. Its subcellular location is the cell membrane. The catalysed reaction is (2R)-2-phosphoglycerate = phosphoenolpyruvate + H2O. It participates in carbohydrate degradation; glycolysis; pyruvate from D-glyceraldehyde 3-phosphate: step 4/5. In terms of biological role, glycolytic enzyme the catalyzes the conversion of 2-phosphoglycerate to phosphoenolpyruvate. In addition to glycolysis, involved in various processes such as growth control, hypoxia tolerance and allergic responses. May also function in the intravascular and pericellular fibrinolytic system due to its ability to serve as a receptor and activator of plasminogen on the cell surface of several cell-types such as leukocytes and neurons. Stimulates immunoglobulin production. The polypeptide is Alpha-enolase (ENO1) (Bos taurus (Bovine)).